Here is a 396-residue protein sequence, read N- to C-terminus: Protein NDRG1-B (396 aa).

Residues 326-396 (RSRTGSAASS…NTPKSMEVSC (71 aa)) are disordered. Over residues 327 to 340 (SRTGSAASSSSQDG) the composition is skewed to low complexity. Tandem repeats lie at residues 340–349 (GNRSRSHTNE), 350–359 (GSRSRSQTGD), 360–369 (GNRSRAHTGD), and 370–379 (GNRSRSHTDT). Positions 340-379 (GNRSRSHTNEGSRSRSQTGDGNRSRAHTGDGNRSRSHTDT) are 4 X 10 AA tandem repeats of G-[NS]-R-S-R-[AS]-[HQ]-T-[DGN]-[DET]. Residues 366–377 (HTGDGNRSRSHT) are compositionally biased toward basic and acidic residues. A compositionally biased stretch (polar residues) spans 378-390 (DTNNVNSDHNTPK).

It belongs to the NDRG family.

Its function is as follows. May be involved in pronephros development, after specification of the pronephros. This Xenopus laevis (African clawed frog) protein is Protein NDRG1-B (ndrg1-b).